The chain runs to 201 residues: LexA repressor (201 aa).

Residues 27 to 47 constitute a DNA-binding region (H-T-H motif); it reads RMEISSAFGFASPNAAEDHLK. Residues S116 and K153 each act as for autocatalytic cleavage activity in the active site.

The protein belongs to the peptidase S24 family. In terms of assembly, homodimer.

It carries out the reaction Hydrolysis of Ala-|-Gly bond in repressor LexA.. Its function is as follows. Represses a number of genes involved in the response to DNA damage (SOS response), including recA and lexA. In the presence of single-stranded DNA, RecA interacts with LexA causing an autocatalytic cleavage which disrupts the DNA-binding part of LexA, leading to derepression of the SOS regulon and eventually DNA repair. This is LexA repressor from Dechloromonas aromatica (strain RCB).